Reading from the N-terminus, the 197-residue chain is Probable GTP-binding protein EngB (197 aa).

The region spanning 22–194 is the EngB-type G domain; sequence DLPEIAFAGR…LETIARMTGI (173 aa). GTP contacts are provided by residues 30 to 37, 57 to 61, 75 to 78, 142 to 145, and 173 to 175; these read GRSNVGKS, GKTRL, DLPG, TKAD, and FST. Residues serine 37 and threonine 59 each coordinate Mg(2+).

Belongs to the TRAFAC class TrmE-Era-EngA-EngB-Septin-like GTPase superfamily. EngB GTPase family. Mg(2+) is required as a cofactor.

In terms of biological role, necessary for normal cell division and for the maintenance of normal septation. The protein is Probable GTP-binding protein EngB of Desulfosudis oleivorans (strain DSM 6200 / JCM 39069 / Hxd3) (Desulfococcus oleovorans).